A 354-amino-acid polypeptide reads, in one-letter code: UDP-3-O-acylglucosamine N-acyltransferase (354 aa).

His-250 serves as the catalytic Proton acceptor.

The protein belongs to the transferase hexapeptide repeat family. LpxD subfamily. In terms of assembly, homotrimer.

The enzyme catalyses a UDP-3-O-[(3R)-3-hydroxyacyl]-alpha-D-glucosamine + a (3R)-hydroxyacyl-[ACP] = a UDP-2-N,3-O-bis[(3R)-3-hydroxyacyl]-alpha-D-glucosamine + holo-[ACP] + H(+). It participates in bacterial outer membrane biogenesis; LPS lipid A biosynthesis. Catalyzes the N-acylation of UDP-3-O-acylglucosamine using 3-hydroxyacyl-ACP as the acyl donor. Is involved in the biosynthesis of lipid A, a phosphorylated glycolipid that anchors the lipopolysaccharide to the outer membrane of the cell. The chain is UDP-3-O-acylglucosamine N-acyltransferase from Methylococcus capsulatus (strain ATCC 33009 / NCIMB 11132 / Bath).